Consider the following 175-residue polypeptide: Large ribosomal subunit protein uL10 (175 aa).

The protein belongs to the universal ribosomal protein uL10 family. In terms of assembly, part of the ribosomal stalk of the 50S ribosomal subunit. The N-terminus interacts with L11 and the large rRNA to form the base of the stalk. The C-terminus forms an elongated spine to which L12 dimers bind in a sequential fashion forming a multimeric L10(L12)X complex.

Forms part of the ribosomal stalk, playing a central role in the interaction of the ribosome with GTP-bound translation factors. The protein is Large ribosomal subunit protein uL10 of Halorhodospira halophila (strain DSM 244 / SL1) (Ectothiorhodospira halophila (strain DSM 244 / SL1)).